A 754-amino-acid polypeptide reads, in one-letter code: Elongation factor G-2, mitochondrial (754 aa).

The tr-type G domain maps to 63–340; sequence DKLRNIGISA…GVVSFLPSPN (278 aa). Residues 72–79, 139–143, and 193–196 contribute to the GTP site; these read AHIDSGKT, DTPGH, and NKLD.

Belongs to the TRAFAC class translation factor GTPase superfamily. Classic translation factor GTPase family. EF-G/EF-2 subfamily. As to expression, expressed in cotyledons and adult leaves at the same levels.

It localises to the mitochondrion. Its pathway is protein biosynthesis; polypeptide chain elongation. In terms of biological role, mitochondrial GTPase that catalyzes the GTP-dependent ribosomal translocation step during translation elongation. During this step, the ribosome changes from the pre-translocational (PRE) to the post-translocational (POST) state as the newly formed A-site-bound peptidyl-tRNA and P-site-bound deacylated tRNA move to the P and E sites, respectively. Catalyzes the coordinated movement of the two tRNA molecules, the mRNA and conformational changes in the ribosome. The chain is Elongation factor G-2, mitochondrial (MEFG2) from Arabidopsis thaliana (Mouse-ear cress).